Consider the following 429-residue polypeptide: Enolase (429 aa).

Residue Gln162 coordinates (2R)-2-phosphoglycerate. The active-site Proton donor is Glu204. 3 residues coordinate Mg(2+): Asp241, Glu286, and Asp313. The (2R)-2-phosphoglycerate site is built by Lys338, Arg367, Ser368, and Lys389. Lys338 acts as the Proton acceptor in catalysis.

This sequence belongs to the enolase family. The cofactor is Mg(2+).

It localises to the cytoplasm. Its subcellular location is the secreted. The protein localises to the cell surface. It carries out the reaction (2R)-2-phosphoglycerate = phosphoenolpyruvate + H2O. The protein operates within carbohydrate degradation; glycolysis; pyruvate from D-glyceraldehyde 3-phosphate: step 4/5. Its function is as follows. Catalyzes the reversible conversion of 2-phosphoglycerate (2-PG) into phosphoenolpyruvate (PEP). It is essential for the degradation of carbohydrates via glycolysis. This Shouchella clausii (strain KSM-K16) (Alkalihalobacillus clausii) protein is Enolase.